Here is a 471-residue protein sequence, read N- to C-terminus: UDP-N-acetylmuramate--L-alanine ligase (471 aa).

Residue 114 to 120 (GTHGKTT) coordinates ATP.

This sequence belongs to the MurCDEF family.

The protein resides in the cytoplasm. The enzyme catalyses UDP-N-acetyl-alpha-D-muramate + L-alanine + ATP = UDP-N-acetyl-alpha-D-muramoyl-L-alanine + ADP + phosphate + H(+). It functions in the pathway cell wall biogenesis; peptidoglycan biosynthesis. Functionally, cell wall formation. The sequence is that of UDP-N-acetylmuramate--L-alanine ligase from Rhizobium meliloti (strain 1021) (Ensifer meliloti).